The primary structure comprises 334 residues: Phosphate acyltransferase (334 aa).

This sequence belongs to the PlsX family. Homodimer. Probably interacts with PlsY.

The protein localises to the cytoplasm. The enzyme catalyses a fatty acyl-[ACP] + phosphate = an acyl phosphate + holo-[ACP]. Its pathway is lipid metabolism; phospholipid metabolism. Its function is as follows. Catalyzes the reversible formation of acyl-phosphate (acyl-PO(4)) from acyl-[acyl-carrier-protein] (acyl-ACP). This enzyme utilizes acyl-ACP as fatty acyl donor, but not acyl-CoA. This Clostridium kluyveri (strain NBRC 12016) protein is Phosphate acyltransferase.